The primary structure comprises 465 residues: Glutamate--tRNA ligase (465 aa).

Positions 8 to 18 (PSPTGYLHIGG) match the 'HIGH' region motif. The short motif at 236 to 240 (RLSKR) is the 'KMSKS' region element. Lys239 lines the ATP pocket.

The protein belongs to the class-I aminoacyl-tRNA synthetase family. Glutamate--tRNA ligase type 1 subfamily. Monomer.

The protein localises to the cytoplasm. It carries out the reaction tRNA(Glu) + L-glutamate + ATP = L-glutamyl-tRNA(Glu) + AMP + diphosphate. Its function is as follows. Catalyzes the attachment of glutamate to tRNA(Glu) in a two-step reaction: glutamate is first activated by ATP to form Glu-AMP and then transferred to the acceptor end of tRNA(Glu). The chain is Glutamate--tRNA ligase from Nitrosospira multiformis (strain ATCC 25196 / NCIMB 11849 / C 71).